We begin with the raw amino-acid sequence, 417 residues long: Serine hydroxymethyltransferase (417 aa).

(6S)-5,6,7,8-tetrahydrofolate contacts are provided by residues Leu-121 and 125–127 (GHL). The residue at position 229 (Lys-229) is an N6-(pyridoxal phosphate)lysine. (6S)-5,6,7,8-tetrahydrofolate is bound at residue 355–357 (SPF).

The protein belongs to the SHMT family. As to quaternary structure, homodimer. Requires pyridoxal 5'-phosphate as cofactor.

It is found in the cytoplasm. It carries out the reaction (6R)-5,10-methylene-5,6,7,8-tetrahydrofolate + glycine + H2O = (6S)-5,6,7,8-tetrahydrofolate + L-serine. It participates in one-carbon metabolism; tetrahydrofolate interconversion. It functions in the pathway amino-acid biosynthesis; glycine biosynthesis; glycine from L-serine: step 1/1. Catalyzes the reversible interconversion of serine and glycine with tetrahydrofolate (THF) serving as the one-carbon carrier. This reaction serves as the major source of one-carbon groups required for the biosynthesis of purines, thymidylate, methionine, and other important biomolecules. Also exhibits THF-independent aldolase activity toward beta-hydroxyamino acids, producing glycine and aldehydes, via a retro-aldol mechanism. This is Serine hydroxymethyltransferase from Proteus mirabilis (strain HI4320).